The chain runs to 266 residues: Glucosamine-6-phosphate deaminase (266 aa).

Catalysis depends on Asp-72, which acts as the Proton acceptor; for enolization step. Asp-141 serves as the catalytic For ring-opening step. Residue His-143 is the Proton acceptor; for ring-opening step of the active site. The active-site For ring-opening step is Glu-148.

This sequence belongs to the glucosamine/galactosamine-6-phosphate isomerase family. NagB subfamily. In terms of assembly, homohexamer.

The enzyme catalyses alpha-D-glucosamine 6-phosphate + H2O = beta-D-fructose 6-phosphate + NH4(+). The protein operates within amino-sugar metabolism; N-acetylneuraminate degradation; D-fructose 6-phosphate from N-acetylneuraminate: step 5/5. Allosterically activated by N-acetylglucosamine 6-phosphate (GlcNAc6P). Catalyzes the reversible isomerization-deamination of glucosamine 6-phosphate (GlcN6P) to form fructose 6-phosphate (Fru6P) and ammonium ion. This chain is Glucosamine-6-phosphate deaminase, found in Cronobacter sakazakii (strain ATCC BAA-894) (Enterobacter sakazakii).